A 159-amino-acid polypeptide reads, in one-letter code: Protein UXT homolog (159 aa).

This sequence belongs to the UXT family.

The protein is Protein UXT homolog of Nematostella vectensis (Starlet sea anemone).